We begin with the raw amino-acid sequence, 413 residues long: Serine hydroxymethyltransferase (413 aa).

Residues leucine 115 and 119–121 (GHL) contribute to the (6S)-5,6,7,8-tetrahydrofolate site. Lysine 224 is subject to N6-(pyridoxal phosphate)lysine.

It belongs to the SHMT family. As to quaternary structure, homodimer. The cofactor is pyridoxal 5'-phosphate.

It localises to the cytoplasm. The catalysed reaction is (6R)-5,10-methylene-5,6,7,8-tetrahydrofolate + glycine + H2O = (6S)-5,6,7,8-tetrahydrofolate + L-serine. Its pathway is one-carbon metabolism; tetrahydrofolate interconversion. It participates in amino-acid biosynthesis; glycine biosynthesis; glycine from L-serine: step 1/1. Functionally, catalyzes the reversible interconversion of serine and glycine with tetrahydrofolate (THF) serving as the one-carbon carrier. This reaction serves as the major source of one-carbon groups required for the biosynthesis of purines, thymidylate, methionine, and other important biomolecules. Also exhibits THF-independent aldolase activity toward beta-hydroxyamino acids, producing glycine and aldehydes, via a retro-aldol mechanism. In Mycoplasma mycoides subsp. mycoides SC (strain CCUG 32753 / NCTC 10114 / PG1), this protein is Serine hydroxymethyltransferase.